A 253-amino-acid chain; its full sequence is 5'-nucleotidase SurE (253 aa).

Residues aspartate 8, aspartate 9, serine 39, and asparagine 91 each contribute to the a divalent metal cation site.

It belongs to the SurE nucleotidase family. A divalent metal cation serves as cofactor.

The protein localises to the cytoplasm. The catalysed reaction is a ribonucleoside 5'-phosphate + H2O = a ribonucleoside + phosphate. Its function is as follows. Nucleotidase that shows phosphatase activity on nucleoside 5'-monophosphates. The polypeptide is 5'-nucleotidase SurE (Albidiferax ferrireducens (strain ATCC BAA-621 / DSM 15236 / T118) (Rhodoferax ferrireducens)).